Consider the following 416-residue polypeptide: UDP-N-acetylglucosamine 1-carboxyvinyltransferase (416 aa).

Residue 22-23 (KN) coordinates phosphoenolpyruvate. A UDP-N-acetyl-alpha-D-glucosamine-binding site is contributed by Arg92. The active-site Proton donor is the Cys116. A 2-(S-cysteinyl)pyruvic acid O-phosphothioketal modification is found at Cys116. Residues 121-125 (RPVDQ), Asp304, and Ile326 contribute to the UDP-N-acetyl-alpha-D-glucosamine site.

It belongs to the EPSP synthase family. MurA subfamily.

Its subcellular location is the cytoplasm. The catalysed reaction is phosphoenolpyruvate + UDP-N-acetyl-alpha-D-glucosamine = UDP-N-acetyl-3-O-(1-carboxyvinyl)-alpha-D-glucosamine + phosphate. It participates in cell wall biogenesis; peptidoglycan biosynthesis. Cell wall formation. Adds enolpyruvyl to UDP-N-acetylglucosamine. The polypeptide is UDP-N-acetylglucosamine 1-carboxyvinyltransferase (Cupriavidus pinatubonensis (strain JMP 134 / LMG 1197) (Cupriavidus necator (strain JMP 134))).